A 1213-amino-acid polypeptide reads, in one-letter code: DNA-directed RNA polymerase subunit beta' (1213 aa).

Positions 60, 62, 75, and 78 each coordinate Zn(2+). The Mg(2+) site is built by Asp450, Asp452, and Asp454. Cys819, Cys893, Cys900, and Cys903 together coordinate Zn(2+).

This sequence belongs to the RNA polymerase beta' chain family. The RNAP catalytic core consists of 2 alpha, 1 beta, 1 beta' and 1 omega subunit. When a sigma factor is associated with the core the holoenzyme is formed, which can initiate transcription. Mg(2+) serves as cofactor. Requires Zn(2+) as cofactor.

It carries out the reaction RNA(n) + a ribonucleoside 5'-triphosphate = RNA(n+1) + diphosphate. In terms of biological role, DNA-dependent RNA polymerase catalyzes the transcription of DNA into RNA using the four ribonucleoside triphosphates as substrates. This is DNA-directed RNA polymerase subunit beta' from Streptococcus pyogenes serotype M18 (strain MGAS8232).